Consider the following 429-residue polypeptide: Phosphomethylpyrimidine synthase (429 aa).

Substrate-binding positions include Asn66, Met94, Tyr123, His162, 184–186 (SRG), 225–228 (DALR), and Glu264. His268 is a binding site for Zn(2+). Residue Tyr291 coordinates substrate. Residue His332 coordinates Zn(2+). The [4Fe-4S] cluster site is built by Cys408, Cys411, and Cys415.

Belongs to the ThiC family. It depends on [4Fe-4S] cluster as a cofactor.

It catalyses the reaction 5-amino-1-(5-phospho-beta-D-ribosyl)imidazole + S-adenosyl-L-methionine = 4-amino-2-methyl-5-(phosphooxymethyl)pyrimidine + CO + 5'-deoxyadenosine + formate + L-methionine + 3 H(+). It participates in cofactor biosynthesis; thiamine diphosphate biosynthesis. In terms of biological role, catalyzes the synthesis of the hydroxymethylpyrimidine phosphate (HMP-P) moiety of thiamine from aminoimidazole ribotide (AIR) in a radical S-adenosyl-L-methionine (SAM)-dependent reaction. This Sulfurisphaera tokodaii (strain DSM 16993 / JCM 10545 / NBRC 100140 / 7) (Sulfolobus tokodaii) protein is Phosphomethylpyrimidine synthase.